The following is a 58-amino-acid chain: NADH dehydrogenase [ubiquinone] 1 beta subcomplex subunit 1 (58 aa).

A helical membrane pass occupies residues 11-27; it reads HWVHVLVPMGFVIGCYL.

It belongs to the complex I NDUFB1 subunit family. Complex I is composed of 45 different subunits.

It is found in the mitochondrion inner membrane. Accessory subunit of the mitochondrial membrane respiratory chain NADH dehydrogenase (Complex I) that is believed not to be involved in catalysis. Complex I functions in the transfer of electrons from NADH to the respiratory chain. The immediate electron acceptor for the enzyme is believed to be ubiquinone. This is NADH dehydrogenase [ubiquinone] 1 beta subcomplex subunit 1 (NDUFB1) from Homo sapiens (Human).